The primary structure comprises 692 residues: Elongation factor G (692 aa).

The tr-type G domain maps to 8–282 (AKTRNIGIMA…AVIAYLPSPL (275 aa)). GTP-binding positions include 17 to 24 (AHVDAGKT), 81 to 85 (DTPGH), and 135 to 138 (NKMD).

It belongs to the TRAFAC class translation factor GTPase superfamily. Classic translation factor GTPase family. EF-G/EF-2 subfamily.

It localises to the cytoplasm. Its function is as follows. Catalyzes the GTP-dependent ribosomal translocation step during translation elongation. During this step, the ribosome changes from the pre-translocational (PRE) to the post-translocational (POST) state as the newly formed A-site-bound peptidyl-tRNA and P-site-bound deacylated tRNA move to the P and E sites, respectively. Catalyzes the coordinated movement of the two tRNA molecules, the mRNA and conformational changes in the ribosome. The polypeptide is Elongation factor G (Streptococcus equi subsp. zooepidemicus (strain MGCS10565)).